The primary structure comprises 113 residues: Flagellar hook-basal body complex protein FliE (113 aa).

It belongs to the FliE family.

It localises to the bacterial flagellum basal body. This is Flagellar hook-basal body complex protein FliE from Rhizobium etli (strain CIAT 652).